The primary structure comprises 246 residues: MIKFENVSKIYPNGTKGLTDVNLQINQGEFVAIIGTSGAGKSTLIRCVNGLNDITSGSLIVNDTEVSKLKGKELRKFRRHVGMIFQSYNLVPRVTVLKNVMFARVPDMSLFKVIFGLFSKEDKLVALDSLNKVGILDKAYIRADQLSGGQQQRVSLARALSQESEILLADEPVSALDPVTAKEVMDDFKRINEEFNKTILLNIHHVELALEYASRIIAVKKGKIVYDGPSQEVTKEILDEVYRKEA.

The region spanning 2–246 (IKFENVSKIY…ILDEVYRKEA (245 aa)) is the ABC transporter domain. An ATP-binding site is contributed by 35 to 42 (GTSGAGKS).

This sequence belongs to the ABC transporter superfamily. Phosphonates importer (TC 3.A.1.9.1) family. In terms of assembly, the complex is composed of two ATP-binding proteins (PhnC), two transmembrane proteins (PhnE) and a solute-binding protein (PhnD).

The protein resides in the cell membrane. The catalysed reaction is phosphonate(out) + ATP + H2O = phosphonate(in) + ADP + phosphate + H(+). Its function is as follows. Part of the ABC transporter complex PhnCDE involved in phosphonates import. Responsible for energy coupling to the transport system. This is Phosphonates import ATP-binding protein PhnC from Lactococcus lactis subsp. lactis (strain IL1403) (Streptococcus lactis).